The chain runs to 231 residues: Two-component response regulator ARR3 (231 aa).

Residues 34-161 (HVLAVDDSLV…DVKRLRSYLT (128 aa)) form the Response regulatory domain. 4-aspartylphosphate is present on Asp-94. The interval 170–231 (GNKRKLTTPP…DSPMRSPGLA (62 aa)) is disordered. Over residues 185–199 (SATSSMESSDSTVES) the composition is skewed to low complexity. Residues 210 to 221 (LTMSPESATSLV) show a composition bias toward polar residues.

This sequence belongs to the ARR family. Type-A subfamily. Post-translationally, two-component system major event consists of a His-to-Asp phosphorelay between a sensor histidine kinase (HK) and a response regulator (RR). In plants, the His-to-Asp phosphorelay involves an additional intermediate named Histidine-containing phosphotransfer protein (HPt). This multistep phosphorelay consists of a His-Asp-His-Asp sequential transfer of a phosphate group between first a His and an Asp of the HK protein, followed by the transfer to a conserved His of the HPt protein and finally the transfer to an Asp in the receiver domain of the RR protein. Predominantly expressed in roots.

It localises to the nucleus. Functions as a response regulator involved in His-to-Asp phosphorelay signal transduction system. Phosphorylation of the Asp residue in the receiver domain activates the ability of the protein to promote the transcription of target genes. Type-A response regulators seem to act as negative regulators of the cytokinin signaling. The chain is Two-component response regulator ARR3 (ARR3) from Arabidopsis thaliana (Mouse-ear cress).